A 163-amino-acid chain; its full sequence is MAAAVVLAAGLCVARRAVAVAGPRGVQVRGAAGVTDGDEVAKAQQAAPGGAAPTIFSRILDRSLPADILYEDQQCLAFRDVAPQAPVHFLVIPKKPIPRISQAEEEDQQLLGHLLLVAKETAKAEGLGDGYRLVINDGKLGAQSVYHLHIHVLGGRQLQWPPG.

The N-terminal 17 residues, 1 to 17, are a transit peptide targeting the mitochondrion; sequence MAAAVVLAAGLCVARRA. In terms of domain architecture, HIT spans 55–163; the sequence is IFSRILDRSL…GGRQLQWPPG (109 aa). Positions 63 and 80 each coordinate AMP. N6-acetyllysine is present on K119. Residue N136 coordinates AMP. Residue K139 is modified to N6-acetyllysine. AMP contacts are provided by residues 142 to 145 and 149 to 151; these read AQSV and HIH. Residues 147–151 carry the Histidine triad motif motif; that stretch reads HLHIH. H149 acts as the Tele-AMP-histidine intermediate in catalysis.

It belongs to the HINT family.

The protein resides in the mitochondrion. It catalyses the reaction adenosine 5'-phosphoramidate + H2O = AMP + NH4(+). Exhibits adenosine 5'-monophosphoramidase activity, hydrolyzing purine nucleotide phosphoramidates with a single phosphate group such as adenosine 5'monophosphoramidate (AMP-NH2) to yield AMP and NH2. Hydrolyzes adenosine 5'-O-p-nitrophenylphosphoramidate (AMP-pNA). May be involved in steroid biosynthesis. May play a role in apoptosis. In Bos taurus (Bovine), this protein is Adenosine 5'-monophosphoramidase HINT2.